Reading from the N-terminus, the 23-residue chain is GLWQLIKDKLKDAATGFVTGIQS.

Expressed by the skin dorsal glands.

It is found in the secreted. Functionally, has no antimicrobial activity. This Ranoidea dahlii (Dahl's aquatic frog) protein is Dahlein-4.2.